The primary structure comprises 1305 residues: Rho GTPase-activating protein 33 (1305 aa).

Residues 1–64 (MLQAQKQSDP…KPGKRLSAPR (64 aa)) form a disordered region. S32 is subject to Phosphoserine. Positions 83–192 (FGHIQLLLSP…CGPVLTWMEL (110 aa)) constitute a PX; atypical domain. The region spanning 210-272 (PAVAAAHVVK…PSECVELFTE (63 aa)) is the SH3 domain. Residues 339 to 534 (CDLGEHLSNS…FLLTHVEVLF (196 aa)) enclose the Rho-GAP domain. 3 disordered regions span residues 575–818 (RTQG…LDIS), 864–1054 (LSDT…SFFS), and 1115–1305 (SYSG…RSYC). A compositionally biased stretch (low complexity) spans 582–595 (TPTEPTTPKTPASP). The residue at position 594 (S594) is a Phosphoserine. Residues 596–608 (VERRKRERAEKQR) show a composition bias toward basic and acidic residues. Residues 646 to 669 (SGSRPDTVTLRSAKSEESLSSQAS) are compositionally biased toward polar residues. The residue at position 660 (S660) is a Phosphoserine. A compositionally biased stretch (low complexity) spans 694–733 (APAGSCESLSSSSSSSSSSSSSSSSESSAGGLGPLSGSPS). Position 749 is a phosphoserine (S749). Over residues 774–786 (PGDPAPPASPAPP) the composition is skewed to pro residues. Over residues 787 to 798 (ASASAFPPRATP) the composition is skewed to low complexity. The span at 864-873 (LSDTCQQEIS) shows a compositional bias: polar residues. The span at 895-915 (LLPPPLPLLRPGGAPPPPPKN) shows a compositional bias: pro residues. Residues 916 to 940 (PARLMALALAERAQQVAEQQSQQEQ) show a composition bias toward low complexity. Composition is skewed to polar residues over residues 992-1020 (RQQS…SQVS), 1039-1054 (SPCS…SFFS), and 1115-1125 (SYSGPSRSWSP). The residue at position 1188 (Y1188) is a Phosphotyrosine. Positions 1194 to 1208 (GPRGPSPASSSSSSP) are enriched in low complexity. R1263 is modified (omega-N-methylarginine). Over residues 1292 to 1305 (SWSLHSEGQTRSYC) the composition is skewed to polar residues.

This sequence belongs to the PX domain-containing GAP family. In terms of assembly, specifically interacts with CDC42 and RHOQ/TC10 through its Rho-GAP domain. Interacts with NEK6. In terms of tissue distribution, highly expressed in brain and testis. Also expressed in white adipose tissue (WAT) and muscle at a low level.

Its subcellular location is the cell membrane. In terms of biological role, may be involved in several stages of intracellular trafficking. Could play an important role in the regulation of glucose transport by insulin. May act as a downstream effector of RHOQ/TC10 in the regulation of insulin-stimulated glucose transport. This Mus musculus (Mouse) protein is Rho GTPase-activating protein 33 (Arhgap33).